We begin with the raw amino-acid sequence, 499 residues long: Sensor histidine kinase PdtaS (499 aa).

The segment at 4–149 (LGDLLAEHTM…PLEGAYLDCA (146 aa)) is GAF. The tract at residues 178–289 (DGFIRLNEGG…TEVKRRDRAL (112 aa)) is PAS-like. Residues 298–493 (EIHHRVKNNL…DVVLRVPIGR (196 aa)) enclose the Histidine kinase domain. His301 is modified (phosphohistidine; by autocatalysis).

In terms of processing, autophosphorylated.

The protein resides in the cytoplasm. The catalysed reaction is ATP + protein L-histidine = ADP + protein N-phospho-L-histidine.. Functionally, member of the two-component regulatory system PdtaR/PdtaS. This two-component system plays an essential role in mycobacterial adaptation to poor nutrient conditions. Nutrient deprivation results in increasing intracellular concentrations of cyclic diguanosine monophosphate (c-di-GMP), which binds to the PdtaS sensor and promotes its autophosphorylation, leading to the activation of the signaling cascade. The phosphate group is then transferred to PdtaR. In Mycolicibacterium smegmatis (strain ATCC 700084 / mc(2)155) (Mycobacterium smegmatis), this protein is Sensor histidine kinase PdtaS.